We begin with the raw amino-acid sequence, 71 residues long: Putative antitoxin VapB14 (71 aa).

Its function is as follows. Putative antitoxin component of a possible type II toxin-antitoxin (TA) system. The cognate toxin is VapB14. The protein is Putative antitoxin VapB14 (vapB14) of Mycobacterium tuberculosis (strain ATCC 25618 / H37Rv).